The sequence spans 219 residues: Translation initiation factor 6 (219 aa).

The protein belongs to the eIF-6 family.

Functionally, binds to the 50S ribosomal subunit and prevents its association with the 30S ribosomal subunit to form the 70S initiation complex. This is Translation initiation factor 6 from Methanosarcina mazei (strain ATCC BAA-159 / DSM 3647 / Goe1 / Go1 / JCM 11833 / OCM 88) (Methanosarcina frisia).